We begin with the raw amino-acid sequence, 227 residues long: MKPSERICAALDFPTFAAAEPFARAVAPEVGLLKVGLELFAAEGPAAVRAAARLGRPVFLDLKLHDIPNTVEGAARSAAASGAALLTVHAAGGAEMVKAAVRGAGPGVRVLAVTVLTSLDAAALDAVGLAGPPEAAVVRLARLAVGAGAGGIVCSPHEVAAVRAAVGPGPLLVVPGVRPAGAAKGDQARVATPAEAVRAGADVIVVGRPLRDAPDPAAAARAIAAGL.

Residues Asp12, Lys34, 61 to 70 (DLKLHDIPNT), Thr117, Arg178, Gln187, Gly207, and Arg208 each bind substrate. Lys63 functions as the Proton donor in the catalytic mechanism.

This sequence belongs to the OMP decarboxylase family. Type 1 subfamily. As to quaternary structure, homodimer.

The catalysed reaction is orotidine 5'-phosphate + H(+) = UMP + CO2. It functions in the pathway pyrimidine metabolism; UMP biosynthesis via de novo pathway; UMP from orotate: step 2/2. In terms of biological role, catalyzes the decarboxylation of orotidine 5'-monophosphate (OMP) to uridine 5'-monophosphate (UMP). This is Orotidine 5'-phosphate decarboxylase from Anaeromyxobacter sp. (strain K).